The primary structure comprises 844 residues: SWI/SNF-related matrix-associated actin-dependent regulator of chromatin subfamily A containing DEAD/H box 1 homolog (844 aa).

Residues 1–23 (MSDSTVAASASASASSSAKSSLS) show a composition bias toward low complexity. Disordered stretches follow at residues 1 to 75 (MSDS…TKLE) and 121 to 180 (NCKP…STKM). The span at 30-42 (INKNASSVVASPS) shows a compositional bias: polar residues. A Helicase ATP-binding domain is found at 301–471 (TVMHKQEMNG…ISLLCFVMPK (171 aa)). 314 to 321 (DEMGLGKT) is a binding site for ATP. A DEGH box motif is present at residues 422 to 425 (DEAH). In terms of domain architecture, Helicase C-terminal spans 656-818 (YLDTLLPKLK…EQRCVVKLLT (163 aa)). Phosphoserine occurs at positions 834, 838, and 841.

It belongs to the SNF2/RAD54 helicase family.

The protein resides in the nucleus. It catalyses the reaction ATP + H2O = ADP + phosphate + H(+). DNA helicase that possesses intrinsic ATP-dependent nucleosome-remodeling activity and is both required for DNA repair and heterochromatin organization. Promotes DNA end resection of double-strand breaks (DSBs) following DNA damage: probably acts by weakening histone DNA interactions in nucleosomes flanking DSBs. The chain is SWI/SNF-related matrix-associated actin-dependent regulator of chromatin subfamily A containing DEAD/H box 1 homolog (Etl1) from Drosophila melanogaster (Fruit fly).